The primary structure comprises 420 residues: Torsin-4A (420 aa).

A helical membrane pass occupies residues 130-150 (CLLLFIAIVCFQIFNAIENLD). 202–209 (GPSGVGKS) provides a ligand contact to ATP.

This sequence belongs to the ClpA/ClpB family. Torsin subfamily.

Its subcellular location is the membrane. This Xenopus tropicalis (Western clawed frog) protein is Torsin-4A (tor4a).